Here is a 500-residue protein sequence, read N- to C-terminus: L-arabinose isomerase (500 aa).

Mn(2+) is bound by residues E306, E333, H350, and H450.

The protein belongs to the arabinose isomerase family. In terms of assembly, homohexamer. Requires Mn(2+) as cofactor.

It carries out the reaction beta-L-arabinopyranose = L-ribulose. Its pathway is carbohydrate degradation; L-arabinose degradation via L-ribulose; D-xylulose 5-phosphate from L-arabinose (bacterial route): step 1/3. In terms of biological role, catalyzes the conversion of L-arabinose to L-ribulose. This chain is L-arabinose isomerase, found in Escherichia coli O17:K52:H18 (strain UMN026 / ExPEC).